We begin with the raw amino-acid sequence, 637 residues long: Chaperone protein HtpG (637 aa).

The tract at residues 1–345 is a; substrate-binding; it reads MSQQETHGFQ…SNDLPLNVSR (345 aa). The interval 346–562 is b; the sequence is EILQDNHVTK…EGEMSTQMIK (217 aa). Residues 563 to 637 are c; it reads LMQAAGQPVP…MNQMLLANMK (75 aa).

Belongs to the heat shock protein 90 family. Homodimer.

It localises to the cytoplasm. Its function is as follows. Molecular chaperone. Has ATPase activity. The sequence is that of Chaperone protein HtpG from Shewanella baltica (strain OS185).